The chain runs to 422 residues: Glycerol-3-phosphate dehydrogenase [NAD(+)] 2 (422 aa).

NAD(+) is bound by residues 69 to 74 (GSGNWG), Phe157, Lys180, and Ala213. Lys180 is a substrate binding site. Lys273 serves as the catalytic Proton acceptor. 2 residues coordinate NAD(+): Arg338 and Gln367. 338 to 339 (RN) provides a ligand contact to substrate.

The protein belongs to the NAD-dependent glycerol-3-phosphate dehydrogenase family.

The catalysed reaction is sn-glycerol 3-phosphate + NAD(+) = dihydroxyacetone phosphate + NADH + H(+). The sequence is that of Glycerol-3-phosphate dehydrogenase [NAD(+)] 2 (GPD2) from Candida glabrata (strain ATCC 2001 / BCRC 20586 / JCM 3761 / NBRC 0622 / NRRL Y-65 / CBS 138) (Yeast).